A 185-amino-acid polypeptide reads, in one-letter code: Ribosome-recycling factor (185 aa).

Residues Asp-137–Asp-162 are disordered.

Belongs to the RRF family.

Its subcellular location is the cytoplasm. Its function is as follows. Responsible for the release of ribosomes from messenger RNA at the termination of protein biosynthesis. May increase the efficiency of translation by recycling ribosomes from one round of translation to another. The protein is Ribosome-recycling factor of Streptomyces coelicolor (strain ATCC BAA-471 / A3(2) / M145).